A 1046-amino-acid polypeptide reads, in one-letter code: RIRYKGIVCDRCGVEVTSAKVRRERMGHIELAAPVSHIWYFKGIPSRMGLVLDMSPRSLEEVIYFASYVVTKPGDTSLTEKQLLSEREYRQLKAEYGNAFEAGMGAEAVQTLLSNVDLEEEVTELKAQLREATGQKRVRAVRRLDIIEAFVKSGNKPEWMVMDVIPIIPPDLRPMVQLEGGRFATSDLNDLYRRVINRNNRLKRLLELNAPGIIVQNEKRMLQEAADALVDNGRRGRPVTGPGNRPLKSLSHMLKGKQGRFRQDLLGKRVDYSGRSVIDVGPFLKMNQMGLPRPMAMELFRPFIMKELVKRDLAGNIRAAKRKIDRHDEDVMDVLEDVIKEHPVLLNRAPTLHRLGIQAFEPVLVSGKAMRLHPLVTEAYNADFDGDQMAIHVPLSDEAQAEARLLMLAAGHILAPKDGKPIVAPSQDMVIGNYYLTTEEAGREGEGMIFKDVNEVRTAYQNKYVHLHTRIGIQTASLSAEKPFTAEQRSRIMMTSVGKLFFNDILPADFPYLNEPTEANLHEIDNRFFLEPGEDIKARYAETPILPPFKKGYLSDIIAEVYKIYKVTETSLLLDRMKDLGYDESTKSGLTVGVADVTDLKEKPEIIEDAHKQVATVTKQFRRGLITDSERYERVIAIWNKAKDDITEKLIEHFEPDNNIFMMSDSGARGNISNFTQLAGMRGLMAAPNGRIMELPIIANFREGLSVLEMFFSTHGARKGMTDTALKTADSGYMTRRLVDVAQDVIIREDDCGSDRGLDVSAIMNGNEVIESLYERILGRYAQKSVFEPQTGDKLVGHNEMITEDIAKRIIEAGVTTVTIRSAFTCNTEHGVCVRCYGRNMATGDVVEVGEAVGTVAAQSIGEPGTQLTMRTFHTGGVAGNDITQGLPRVQEIFEARNPKGRAMITEVTGEVTTIEENPADRTKEVTIQGETDTRTYTLPMSSRMRVGEGDHIHRGETLNEGSADPKEIIQVRDTLATENYIVLEVQKVYRMQGVEISDKHIEVMARQMLRKVRVMDPGETDLLPGTLMDIAQFRDANEGTLLKGG.

Mg(2+) is bound by residues Asp383, Asp385, and Asp387. 4 residues coordinate Zn(2+): Cys752, Cys826, Cys833, and Cys836.

Belongs to the RNA polymerase beta' chain family. In terms of assembly, the RNAP catalytic core consists of 2 alpha, 1 beta, 1 beta' and 1 omega subunit. When a sigma factor is associated with the core the holoenzyme is formed, which can initiate transcription. The cofactor is Mg(2+). Zn(2+) serves as cofactor.

The catalysed reaction is RNA(n) + a ribonucleoside 5'-triphosphate = RNA(n+1) + diphosphate. In terms of biological role, DNA-dependent RNA polymerase catalyzes the transcription of DNA into RNA using the four ribonucleoside triphosphates as substrates. In Weissella hellenica, this protein is DNA-directed RNA polymerase subunit beta'.